A 343-amino-acid chain; its full sequence is Tetraacyldisaccharide 4'-kinase (343 aa).

Residue 55–62 participates in ATP binding; it reads TVGGEGKT.

The protein belongs to the LpxK family.

The catalysed reaction is a lipid A disaccharide + ATP = a lipid IVA + ADP + H(+). It functions in the pathway glycolipid biosynthesis; lipid IV(A) biosynthesis; lipid IV(A) from (3R)-3-hydroxytetradecanoyl-[acyl-carrier-protein] and UDP-N-acetyl-alpha-D-glucosamine: step 6/6. Its function is as follows. Transfers the gamma-phosphate of ATP to the 4'-position of a tetraacyldisaccharide 1-phosphate intermediate (termed DS-1-P) to form tetraacyldisaccharide 1,4'-bis-phosphate (lipid IVA). This Chelativorans sp. (strain BNC1) protein is Tetraacyldisaccharide 4'-kinase.